The chain runs to 341 residues: MTELFYDDDADLSIIQGRTVAVIGYGSQGHAHALSLRDSGVDVRVGLAEGSQSRAKAEAEGLRVLNVAEAVAEADVIMVLTPDQVQRHVYAESIAANLQAGDALFFGHGFNIRYGYIQPPADVDVALVAPKGPGHIVRREFEAGRGVPDLIAVEQDPSGNAWALALSYAKAIGGTRAGVIKTTFTEETETDLFGEQAVLCGGASQLIQYGFETLTEAGYKPEVAYFEVLHELKLIVDLMVEGGIAKQRWSVSDTAEYGDYVSGPLVIDAHVKDNMKAVLKDIQDGTFAKRFIDDQDAGAPEFKALRAKGEQHPIETTGRELRKLFSWIQNDDDYTEGSVAR.

The 182-residue stretch at 1 to 182 folds into the KARI N-terminal Rossmann domain; that stretch reads MTELFYDDDA…GGTRAGVIKT (182 aa). NADP(+) contacts are provided by residues 25 to 28, Ser-51, Ser-53, and 83 to 86; these read YGSQ and DQVQ. The active site involves His-108. Position 134 (Gly-134) interacts with NADP(+). Positions 183–328 constitute a KARI C-terminal knotted domain; that stretch reads TFTEETETDL…RELRKLFSWI (146 aa). 4 residues coordinate Mg(2+): Asp-191, Glu-195, Glu-227, and Glu-231. Ser-252 is a binding site for substrate.

Belongs to the ketol-acid reductoisomerase family. Requires Mg(2+) as cofactor.

It carries out the reaction (2R)-2,3-dihydroxy-3-methylbutanoate + NADP(+) = (2S)-2-acetolactate + NADPH + H(+). It catalyses the reaction (2R,3R)-2,3-dihydroxy-3-methylpentanoate + NADP(+) = (S)-2-ethyl-2-hydroxy-3-oxobutanoate + NADPH + H(+). The protein operates within amino-acid biosynthesis; L-isoleucine biosynthesis; L-isoleucine from 2-oxobutanoate: step 2/4. It functions in the pathway amino-acid biosynthesis; L-valine biosynthesis; L-valine from pyruvate: step 2/4. Involved in the biosynthesis of branched-chain amino acids (BCAA). Catalyzes an alkyl-migration followed by a ketol-acid reduction of (S)-2-acetolactate (S2AL) to yield (R)-2,3-dihydroxy-isovalerate. In the isomerase reaction, S2AL is rearranged via a Mg-dependent methyl migration to produce 3-hydroxy-3-methyl-2-ketobutyrate (HMKB). In the reductase reaction, this 2-ketoacid undergoes a metal-dependent reduction by NADPH to yield (R)-2,3-dihydroxy-isovalerate. This is Ketol-acid reductoisomerase (NADP(+)) from Renibacterium salmoninarum (strain ATCC 33209 / DSM 20767 / JCM 11484 / NBRC 15589 / NCIMB 2235).